Reading from the N-terminus, the 230-residue chain is MAHPSQLGFQDAASPVMEELIHFHDHTLMIVFLISTLVLYIITAMVSTKLTNKYILDSQEIEIVWTILPAIILIMIALPSLRILYLMDEINDPHLTIKAMGHQWYWSYEYTDYEDLGFDSYMIQTQDLTPGQFRLLETDHRMVVPMESPIRVLVSAEDVLHAWAVPALGVKMDAVPGRLNQTAFIISRPGVYYGQCSEICGANHSFMPIVVEAVPLEHFETWSSLMLEEA.

Topologically, residues 1-14 are mitochondrial intermembrane; sequence MAHPSQLGFQDAAS. Residues 15–45 traverse the membrane as a helical segment; the sequence is PVMEELIHFHDHTLMIVFLISTLVLYIITAM. The Mitochondrial matrix segment spans residues 46–59; it reads VSTKLTNKYILDSQ. The chain crosses the membrane as a helical span at residues 60–87; it reads EIEIVWTILPAIILIMIALPSLRILYLM. Residues 88–230 lie on the Mitochondrial intermembrane side of the membrane; sequence DEINDPHLTI…TWSSLMLEEA (143 aa). Positions 161, 196, 198, 200, 204, and 207 each coordinate Cu cation. E198 contacts Mg(2+).

It belongs to the cytochrome c oxidase subunit 2 family. Component of the cytochrome c oxidase (complex IV, CIV), a multisubunit enzyme composed of 14 subunits. The complex is composed of a catalytic core of 3 subunits MT-CO1, MT-CO2 and MT-CO3, encoded in the mitochondrial DNA, and 11 supernumerary subunits COX4I, COX5A, COX5B, COX6A, COX6B, COX6C, COX7A, COX7B, COX7C, COX8 and NDUFA4, which are encoded in the nuclear genome. The complex exists as a monomer or a dimer and forms supercomplexes (SCs) in the inner mitochondrial membrane with NADH-ubiquinone oxidoreductase (complex I, CI) and ubiquinol-cytochrome c oxidoreductase (cytochrome b-c1 complex, complex III, CIII), resulting in different assemblies (supercomplex SCI(1)III(2)IV(1) and megacomplex MCI(2)III(2)IV(2)). Found in a complex with TMEM177, COA6, COX18, COX20, SCO1 and SCO2. Interacts with TMEM177 in a COX20-dependent manner. Interacts with COX20. Interacts with COX16. It depends on Cu cation as a cofactor.

The protein localises to the mitochondrion inner membrane. It carries out the reaction 4 Fe(II)-[cytochrome c] + O2 + 8 H(+)(in) = 4 Fe(III)-[cytochrome c] + 2 H2O + 4 H(+)(out). Its function is as follows. Component of the cytochrome c oxidase, the last enzyme in the mitochondrial electron transport chain which drives oxidative phosphorylation. The respiratory chain contains 3 multisubunit complexes succinate dehydrogenase (complex II, CII), ubiquinol-cytochrome c oxidoreductase (cytochrome b-c1 complex, complex III, CIII) and cytochrome c oxidase (complex IV, CIV), that cooperate to transfer electrons derived from NADH and succinate to molecular oxygen, creating an electrochemical gradient over the inner membrane that drives transmembrane transport and the ATP synthase. Cytochrome c oxidase is the component of the respiratory chain that catalyzes the reduction of oxygen to water. Electrons originating from reduced cytochrome c in the intermembrane space (IMS) are transferred via the dinuclear copper A center (CU(A)) of subunit 2 and heme A of subunit 1 to the active site in subunit 1, a binuclear center (BNC) formed by heme A3 and copper B (CU(B)). The BNC reduces molecular oxygen to 2 water molecules using 4 electrons from cytochrome c in the IMS and 4 protons from the mitochondrial matrix. The polypeptide is Cytochrome c oxidase subunit 2 (MT-CO2) (Scyliorhinus canicula (Small-spotted catshark)).